A 159-amino-acid chain; its full sequence is 2-C-methyl-D-erythritol 2,4-cyclodiphosphate synthase (159 aa).

Residues D8 and H10 each contribute to the a divalent metal cation site. 4-CDP-2-C-methyl-D-erythritol 2-phosphate contacts are provided by residues 8–10 (DVH) and 34–35 (HS). H42 provides a ligand contact to a divalent metal cation. 4-CDP-2-C-methyl-D-erythritol 2-phosphate-binding positions include 56–58 (DIG), 61–65 (FPDTD), 100–106 (AQAPKML), 132–135 (TTTE), F139, and R142.

The protein belongs to the IspF family. As to quaternary structure, homotrimer. A divalent metal cation is required as a cofactor.

It catalyses the reaction 4-CDP-2-C-methyl-D-erythritol 2-phosphate = 2-C-methyl-D-erythritol 2,4-cyclic diphosphate + CMP. It functions in the pathway isoprenoid biosynthesis; isopentenyl diphosphate biosynthesis via DXP pathway; isopentenyl diphosphate from 1-deoxy-D-xylulose 5-phosphate: step 4/6. In terms of biological role, involved in the biosynthesis of isopentenyl diphosphate (IPP) and dimethylallyl diphosphate (DMAPP), two major building blocks of isoprenoid compounds. Catalyzes the conversion of 4-diphosphocytidyl-2-C-methyl-D-erythritol 2-phosphate (CDP-ME2P) to 2-C-methyl-D-erythritol 2,4-cyclodiphosphate (ME-CPP) with a corresponding release of cytidine 5-monophosphate (CMP). In Escherichia coli O81 (strain ED1a), this protein is 2-C-methyl-D-erythritol 2,4-cyclodiphosphate synthase.